The following is a 338-amino-acid chain: Porphobilinogen deaminase (338 aa).

An S-(dipyrrolylmethanemethyl)cysteine modification is found at Cys-265.

It belongs to the HMBS family. Dipyrromethane is required as a cofactor.

The enzyme catalyses 4 porphobilinogen + H2O = hydroxymethylbilane + 4 NH4(+). The protein operates within porphyrin-containing compound metabolism; protoporphyrin-IX biosynthesis; coproporphyrinogen-III from 5-aminolevulinate: step 2/4. Tetrapolymerization of the monopyrrole PBG into the hydroxymethylbilane pre-uroporphyrinogen in several discrete steps. The chain is Porphobilinogen deaminase (HEM3) from Yarrowia lipolytica (strain CLIB 122 / E 150) (Yeast).